A 294-amino-acid polypeptide reads, in one-letter code: Acetylglutamate kinase (294 aa).

Substrate contacts are provided by residues 63-64, Arg-85, and Asn-188; that span reads GG.

Belongs to the acetylglutamate kinase family. ArgB subfamily.

The protein resides in the cytoplasm. The enzyme catalyses N-acetyl-L-glutamate + ATP = N-acetyl-L-glutamyl 5-phosphate + ADP. The protein operates within amino-acid biosynthesis; L-arginine biosynthesis; N(2)-acetyl-L-ornithine from L-glutamate: step 2/4. Its function is as follows. Catalyzes the ATP-dependent phosphorylation of N-acetyl-L-glutamate. This chain is Acetylglutamate kinase, found in Methanococcus aeolicus (strain ATCC BAA-1280 / DSM 17508 / OCM 812 / Nankai-3).